The following is a 284-amino-acid chain: Syntaxin-like protein psy1 (284 aa).

Positions 23–57 form a coiled coil; sequence EEIDHIRDAIRQIEDNVGRIEMLHQQSLQEIDEAN. A t-SNARE coiled-coil homology domain is found at 181 to 243; sequence LREVQERHAD…GEGTQHMDRA (63 aa). A helical; Anchor for type IV membrane protein membrane pass occupies residues 260–280; sequence ICVVIICVIVAVLCGVLIPVL.

The protein belongs to the syntaxin family.

It localises to the cell membrane. The protein localises to the prospore membrane. The protein is Syntaxin-like protein psy1 (psy1) of Schizosaccharomyces pombe (strain 972 / ATCC 24843) (Fission yeast).